Consider the following 207-residue polypeptide: C-type lectin domain family 2 member D11 (207 aa).

The Cytoplasmic segment spans residues 1-44 (MSAKKASQPMLNTTGSLQEGEMGKMFHGKCLRIVSPESPAKLYC). Phosphoserine occurs at positions 7 and 16. The helical; Signal-anchor for type II membrane protein transmembrane segment at 45–65 (CYGVIMVLSVAVVALSVALSV) threads the bilayer. Over 66-207 (KMTPQISTIN…LQCKTPFSPM (142 aa)) the chain is Extracellular. Positions 87-198 (VGNKCFYFSE…SCSKLNSYSL (112 aa)) constitute a C-type lectin domain. An N-linked (GlcNAc...) asparagine glycan is attached at N100.

The protein resides in the cell membrane. In terms of biological role, receptor for KLRB1B that protects target cells against natural killer cell-mediated lysis. In Rattus norvegicus (Rat), this protein is C-type lectin domain family 2 member D11 (Clec2d11).